Here is a 65-residue protein sequence, read N- to C-terminus: pH-response transcription factor pacC/RIM101 (65 aa).

The segment at 16-40 adopts a C2H2-type 1 zinc-finger fold; that stretch reads LTCQWNSCRTTTVKRDHITSHIRVH. Residues 46-65 form a C2H2-type 2; degenerate zinc finger; sequence HKCEFCGKSFKRPQDLKKHV.

Belongs to the pacC/RIM101 family.

The protein resides in the nucleus. Functionally, transcription factor that mediates regulation of both acid- and alkaline-expressed genes in response to ambient pH. At alkaline ambient pH, activates transcription of alkaline-expressed genes (including pac1 itself) and represses transcription of acid-expressed genes. The chain is pH-response transcription factor pacC/RIM101 (pac1) from Colletotrichum gloeosporioides (Anthracnose fungus).